Here is a 3507-residue protein sequence, read N- to C-terminus: Dynein axonemal heavy chain 14 (3507 aa).

The interval 91-126 (PHLPGTQDPLRRVRDPTPIVASSPGRRRGSWSGGYG) is disordered. A coiled-coil region spans residues 354 to 381 (DEFCEEQLQQATQALKQLEDIRNKAISE). The GPAGTGKT motif motif lies at 1164–1171 (GPAGTGKT). ATP contacts are provided by residues 1164–1171 (GPAGTGKT) and 1427–1434 (GPTGGGKT). Residue asparagine 1818 is glycosylated (N-linked (GlcNAc...) asparagine).

This sequence belongs to the dynein heavy chain family. As to quaternary structure, consists of at least two heavy chains and a number of intermediate and light chains.

The protein resides in the cytoplasm. It localises to the cytoskeleton. It is found in the cilium axoneme. Force generating protein of respiratory cilia. Produces force towards the minus ends of microtubules. Dynein has ATPase activity; the force-producing power stroke is thought to occur on release of ADP. Involved in sperm motility; implicated in sperm flagellar assembly. This is Dynein axonemal heavy chain 14 (DNAH14) from Homo sapiens (Human).